Consider the following 212-residue polypeptide: MNSAAPHGSSNWDPVGLGLVPMVVEQSGRGERAYDIYSRLLKERVIFLVGPVNDVTANLIVAQLLFLESENPDKDVYFYINSPGGSVSSGMAIYDTMQFIKPSVSTLCIGQAASMGSFLLAAGEKGKRFCLPNSRVMIHQPLGGFQGQASDIEIHAREILGIRAKLNEMLAKHTGQPIEQIEKDTDRDRFMSAADAVEYGIVDKVLTNRADS.

Residue serine 114 is the Nucleophile of the active site. Histidine 139 is a catalytic residue.

The protein belongs to the peptidase S14 family. As to quaternary structure, fourteen ClpP subunits assemble into 2 heptameric rings which stack back to back to give a disk-like structure with a central cavity, resembling the structure of eukaryotic proteasomes.

The protein localises to the cytoplasm. It carries out the reaction Hydrolysis of proteins to small peptides in the presence of ATP and magnesium. alpha-casein is the usual test substrate. In the absence of ATP, only oligopeptides shorter than five residues are hydrolyzed (such as succinyl-Leu-Tyr-|-NHMec, and Leu-Tyr-Leu-|-Tyr-Trp, in which cleavage of the -Tyr-|-Leu- and -Tyr-|-Trp bonds also occurs).. Its function is as follows. Cleaves peptides in various proteins in a process that requires ATP hydrolysis. Has a chymotrypsin-like activity. Plays a major role in the degradation of misfolded proteins. The polypeptide is ATP-dependent Clp protease proteolytic subunit (Aromatoleum aromaticum (strain DSM 19018 / LMG 30748 / EbN1) (Azoarcus sp. (strain EbN1))).